Here is a 122-residue protein sequence, read N- to C-terminus: Small ribosomal subunit protein uS13c (122 aa).

Belongs to the universal ribosomal protein uS13 family. Part of the 30S ribosomal subunit.

It is found in the plastid. It localises to the chloroplast. Its function is as follows. Located at the top of the head of the 30S subunit, it contacts several helices of the 16S rRNA. This is Small ribosomal subunit protein uS13c from Cyanidium caldarium (Red alga).